Reading from the N-terminus, the 272-residue chain is Catechol O-methyltransferase (272 aa).

Residues 1–6 (MLEAPP) are Cytoplasmic-facing. A helical; Signal-anchor for type II membrane protein transmembrane segment spans residues 7-27 (LLLVAGGVGLALLALRWLATT). Residues 28–272 (DLQFFGRAFI…YKGLSGPARP (245 aa)) are Extracellular-facing. Residues Val93, Glu115, Ser123, Glu141, 168–171 (GASQ), Ser170, and Asp192 contribute to the S-adenosyl-L-methionine site. Asp192 provides a ligand contact to Mg(2+). Lys195 is a substrate binding site. 2 residues coordinate Mg(2+): Asp220 and Asn221. Positions 221 and 250 each coordinate substrate. Ser267 bears the Phosphoserine mark.

This sequence belongs to the class I-like SAM-binding methyltransferase superfamily. Cation-dependent O-methyltransferase family. Mg(2+) is required as a cofactor.

Its subcellular location is the cytoplasm. The protein localises to the cell membrane. It carries out the reaction a catechol + S-adenosyl-L-methionine = a guaiacol + S-adenosyl-L-homocysteine + H(+). It catalyses the reaction 2-hydroxyestrone + S-adenosyl-L-methionine = 2-hydroxy-3-methoxy-estrone + S-adenosyl-L-homocysteine + H(+). The enzyme catalyses 4-hydroxyestrone + S-adenosyl-L-methionine = 4-methoxyestrone + S-adenosyl-L-homocysteine + H(+). The catalysed reaction is 2-hydroxyestrone + S-adenosyl-L-methionine = 2-methoxyestrone + S-adenosyl-L-homocysteine + H(+). It carries out the reaction 4-hydroxy-17beta-estradiol + S-adenosyl-L-methionine = 4-methoxy-17beta-estradiol + S-adenosyl-L-homocysteine + H(+). It catalyses the reaction 2-hydroxy-17beta-estradiol + S-adenosyl-L-methionine = 2-hydroxy-3-methoxy-17beta-estradiol + S-adenosyl-L-homocysteine + H(+). The enzyme catalyses 2-hydroxy-17beta-estradiol + S-adenosyl-L-methionine = 2-methoxy-17beta-estradiol + S-adenosyl-L-homocysteine + H(+). Catalyzes the O-methylation, and thereby the inactivation, of catecholamine neurotransmitters and catechol hormones. Also shortens the biological half-lives of certain neuroactive drugs, like L-DOPA, alpha-methyl DOPA and isoproterenol. In Bos taurus (Bovine), this protein is Catechol O-methyltransferase (COMT).